A 340-amino-acid chain; its full sequence is Maltose epimerase (340 aa).

Position 79 (Arg-79) interacts with substrate. His-178 functions as the Proton donor in the catalytic mechanism. Substrate is bound at residue Asp-247. The active-site Proton acceptor is Glu-305.

This sequence belongs to the aldose epimerase family.

It catalyses the reaction alpha-maltose = beta-maltose. It functions in the pathway carbohydrate metabolism; hexose metabolism. Its function is as follows. Catalyzes the interconversion of alpha and beta anomers of maltose. The chain is Maltose epimerase from Levilactobacillus brevis (strain ATCC 367 / BCRC 12310 / CIP 105137 / JCM 1170 / LMG 11437 / NCIMB 947 / NCTC 947) (Lactobacillus brevis).